The primary structure comprises 281 residues: MIETLLPASALAFPAIDPVIFRIGPLAVHWYGLGYVVGILFAWWYGKKLLRSHRLWANNQPPMAPEALDDFVIWAALGVVLGGRIGYVLFYNFSYYISNPLAIPALWDGGMSFHGGILGTTLAMILFARSRGILVWSMFDTIAAGVPIGLGVVRVANFINSELWGRVSDVPWAVYFPNGGPLPRHPSQLYEAFLEGLVLFFVLFVLVWGARKLKQPGFVAGAFVTGYGLSRIAVEFFREPDAQIGYLFGGWLTMGMVLSVPMVLLGLWAMWRANRAAARNA.

A run of 4 helical transmembrane segments spans residues 23 to 43 (IGPL…LFAW), 71 to 91 (FVIW…VLFY), 107 to 127 (WDGG…MILF), and 133 to 153 (ILVW…LGVV). Arg154 provides a ligand contact to a 1,2-diacyl-sn-glycero-3-phospho-(1'-sn-glycerol). Transmembrane regions (helical) follow at residues 189–209 (LYEA…LVWG), 217–237 (GFVA…VEFF), and 247–267 (LFGG…LLGL).

It belongs to the Lgt family.

Its subcellular location is the cell inner membrane. It catalyses the reaction L-cysteinyl-[prolipoprotein] + a 1,2-diacyl-sn-glycero-3-phospho-(1'-sn-glycerol) = an S-1,2-diacyl-sn-glyceryl-L-cysteinyl-[prolipoprotein] + sn-glycerol 1-phosphate + H(+). Its pathway is protein modification; lipoprotein biosynthesis (diacylglyceryl transfer). Functionally, catalyzes the transfer of the diacylglyceryl group from phosphatidylglycerol to the sulfhydryl group of the N-terminal cysteine of a prolipoprotein, the first step in the formation of mature lipoproteins. The polypeptide is Phosphatidylglycerol--prolipoprotein diacylglyceryl transferase (Brucella canis (strain ATCC 23365 / NCTC 10854 / RM-666)).